The following is a 417-amino-acid chain: MFSFEKNSLKNTDKEIFDAIELEVKRQHEHVELIASENYASPAVMEAQGSQLTNKYAEGYHGKRYYGGCEFVDIAEKLAIERAQQLFGVDYANVQPHSGSQANAAVYNAVLKPGDTVLGMDLGAGGHLTHGSKVNFSGKIYNSIQYGLDENGDIDYKQVAQLAKEHKPKMIIAGFSAFSGIINWQKFREIADSVDAVLMADIAHVAGLVAAGVYPNPFPYVYVATTTTHKTLRGPRGGLILCNNNPELAKKFQSAIFPGIQGGPLMHVIAAKAVAFKEALEPSFVDYQKQVLKNAKAMEKVLKQRGINIISGGTSNHLLLLDITNTGFSGKEAEAALGRANITVNKNSIPNDPRSPFVTSGLRIGSPAITTRGFKEKECELVANLLADVVFNCGDEKVENETAAKVLDLCDKFPVYK.

(6S)-5,6,7,8-tetrahydrofolate-binding positions include Leu-122 and 126–128; that span reads GHL. Lys-230 carries the post-translational modification N6-(pyridoxal phosphate)lysine. Residue 355-357 coordinates (6S)-5,6,7,8-tetrahydrofolate; it reads SPF.

This sequence belongs to the SHMT family. As to quaternary structure, homodimer. Pyridoxal 5'-phosphate serves as cofactor.

The protein localises to the cytoplasm. The enzyme catalyses (6R)-5,10-methylene-5,6,7,8-tetrahydrofolate + glycine + H2O = (6S)-5,6,7,8-tetrahydrofolate + L-serine. Its pathway is one-carbon metabolism; tetrahydrofolate interconversion. The protein operates within amino-acid biosynthesis; glycine biosynthesis; glycine from L-serine: step 1/1. In terms of biological role, catalyzes the reversible interconversion of serine and glycine with tetrahydrofolate (THF) serving as the one-carbon carrier. This reaction serves as the major source of one-carbon groups required for the biosynthesis of purines, thymidylate, methionine, and other important biomolecules. Also exhibits THF-independent aldolase activity toward beta-hydroxyamino acids, producing glycine and aldehydes, via a retro-aldol mechanism. The sequence is that of Serine hydroxymethyltransferase from Francisella tularensis subsp. tularensis (strain FSC 198).